We begin with the raw amino-acid sequence, 366 residues long: Methylthioribose-1-phosphate isomerase (366 aa).

D260 (proton donor) is an active-site residue.

This sequence belongs to the eIF-2B alpha/beta/delta subunits family. MtnA subfamily.

It localises to the cytoplasm. Its subcellular location is the nucleus. It carries out the reaction 5-(methylsulfanyl)-alpha-D-ribose 1-phosphate = 5-(methylsulfanyl)-D-ribulose 1-phosphate. Its pathway is amino-acid biosynthesis; L-methionine biosynthesis via salvage pathway; L-methionine from S-methyl-5-thio-alpha-D-ribose 1-phosphate: step 1/6. In terms of biological role, catalyzes the interconversion of methylthioribose-1-phosphate (MTR-1-P) into methylthioribulose-1-phosphate (MTRu-1-P). This chain is Methylthioribose-1-phosphate isomerase, found in Caenorhabditis briggsae.